Reading from the N-terminus, the 365-residue chain is Chaperone protein DnaJ (365 aa).

Positions 4–70 (DYYKILGVDR…EKRRIYDQTG (67 aa)) constitute a J domain. The CR-type zinc finger occupies 139 to 220 (GTEKRIKFRR…CNGTGTIVVD (82 aa)). Zn(2+) is bound by residues Cys152, Cys155, Cys168, Cys171, Cys194, Cys197, Cys208, and Cys211. CXXCXGXG motif repeat units follow at residues 152 to 159 (CPDCKGTG), 168 to 175 (CPTCHGTG), 194 to 201 (CNTCGGKG), and 208 to 215 (CPRCNGTG).

The protein belongs to the DnaJ family. As to quaternary structure, homodimer. It depends on Zn(2+) as a cofactor.

The protein resides in the cytoplasm. Its function is as follows. Participates actively in the response to hyperosmotic and heat shock by preventing the aggregation of stress-denatured proteins and by disaggregating proteins, also in an autonomous, DnaK-independent fashion. Unfolded proteins bind initially to DnaJ; upon interaction with the DnaJ-bound protein, DnaK hydrolyzes its bound ATP, resulting in the formation of a stable complex. GrpE releases ADP from DnaK; ATP binding to DnaK triggers the release of the substrate protein, thus completing the reaction cycle. Several rounds of ATP-dependent interactions between DnaJ, DnaK and GrpE are required for fully efficient folding. Also involved, together with DnaK and GrpE, in the DNA replication of plasmids through activation of initiation proteins. The protein is Chaperone protein DnaJ of Thermoplasma volcanium (strain ATCC 51530 / DSM 4299 / JCM 9571 / NBRC 15438 / GSS1).